The following is a 357-amino-acid chain: EGF-like domain-containing protein 2 (357 aa).

A signal peptide spans 1-20 (MPPSLSHLFLLSTFASLALC). EGF-like domains lie at 21 to 55 (SFYC…FNCG) and 61 to 93 (ISAA…PTCQ). 6 cysteine pairs are disulfide-bonded: cysteine 24–cysteine 37, cysteine 31–cysteine 43, cysteine 45–cysteine 54, cysteine 65–cysteine 75, cysteine 69–cysteine 81, and cysteine 83–cysteine 92.

In terms of tissue distribution, prismatic layer of shell (at protein level). Expressed primarily in the mantle with highest level in the mantle edge and lower level in the mantle pallium.

The protein resides in the secreted. The sequence is that of EGF-like domain-containing protein 2 from Pinctada maxima (Silver-lipped pearl oyster).